Here is a 347-residue protein sequence, read N- to C-terminus: UDP-N-acetylenolpyruvoylglucosamine reductase (347 aa).

The FAD-binding PCMH-type domain occupies 24–195 (FDARARVAAR…VAVTFRLPKA (172 aa)). Arg-171 is a catalytic residue. Residue Ser-247 is the Proton donor of the active site. Glu-343 is an active-site residue.

This sequence belongs to the MurB family. It depends on FAD as a cofactor.

It localises to the cytoplasm. It carries out the reaction UDP-N-acetyl-alpha-D-muramate + NADP(+) = UDP-N-acetyl-3-O-(1-carboxyvinyl)-alpha-D-glucosamine + NADPH + H(+). It participates in cell wall biogenesis; peptidoglycan biosynthesis. In terms of biological role, cell wall formation. In Burkholderia mallei (strain NCTC 10247), this protein is UDP-N-acetylenolpyruvoylglucosamine reductase.